Here is a 300-residue protein sequence, read N- to C-terminus: UDP-3-O-acyl-N-acetylglucosamine deacetylase (300 aa).

Positions 78, 237, and 241 each coordinate Zn(2+). The active-site Proton donor is the H264.

The protein belongs to the LpxC family. Zn(2+) is required as a cofactor.

It carries out the reaction a UDP-3-O-[(3R)-3-hydroxyacyl]-N-acetyl-alpha-D-glucosamine + H2O = a UDP-3-O-[(3R)-3-hydroxyacyl]-alpha-D-glucosamine + acetate. The protein operates within glycolipid biosynthesis; lipid IV(A) biosynthesis; lipid IV(A) from (3R)-3-hydroxytetradecanoyl-[acyl-carrier-protein] and UDP-N-acetyl-alpha-D-glucosamine: step 2/6. Its function is as follows. Catalyzes the hydrolysis of UDP-3-O-myristoyl-N-acetylglucosamine to form UDP-3-O-myristoylglucosamine and acetate, the committed step in lipid A biosynthesis. This is UDP-3-O-acyl-N-acetylglucosamine deacetylase from Acinetobacter baumannii (strain AB307-0294).